The following is a 167-amino-acid chain: Transmembrane protein 229B (167 aa).

The Cytoplasmic portion of the chain corresponds to 1–14 (MAAAEPLTAFSRWY). The chain crosses the membrane as a helical span at residues 15 to 35 (LYAIHGYFCEVMFTAAWEFVV). Residues 36–40 (NFNWK) lie on the Extracellular side of the membrane. The helical transmembrane segment at 41–61 (FPGVTSVWALFIYGTSILIVE) threads the bilayer. At 62–72 (KMYLYLKDKCH) the chain is on the cytoplasmic side. A helical membrane pass occupies residues 73–93 (ILVRCFIYTLWTYLWEFTTGL). The Extracellular portion of the chain corresponds to 94 to 109 (ILRQFNACPWDYSQFD). Residues 110–130 (FDFMGLITLEYAIPWFCASFI) form a helical membrane-spanning segment. Residues 131-167 (MEQLVIRNTLRLRFDETAEPGAPTVPVALANGHVKTD) lie on the Cytoplasmic side of the membrane.

It belongs to the TMEM229 family.

Its subcellular location is the membrane. The protein is Transmembrane protein 229B (TMEM229B) of Gallus gallus (Chicken).